A 206-amino-acid chain; its full sequence is Pyridoxine/pyridoxamine 5'-phosphate oxidase (206 aa).

FMN-binding positions include Arg-53–Lys-58, Tyr-68–Thr-69, Lys-75, and Gln-97. A substrate-binding site is contributed by Lys-58. Residues Tyr-115, Arg-119, and Ser-123 each coordinate substrate. FMN contacts are provided by residues Gln-132 to Ser-133 and Trp-177. Arg-183 to His-185 is a binding site for substrate. Residue Arg-187 coordinates FMN.

Belongs to the pyridoxamine 5'-phosphate oxidase family. As to quaternary structure, homodimer. FMN is required as a cofactor.

The catalysed reaction is pyridoxamine 5'-phosphate + O2 + H2O = pyridoxal 5'-phosphate + H2O2 + NH4(+). The enzyme catalyses pyridoxine 5'-phosphate + O2 = pyridoxal 5'-phosphate + H2O2. The protein operates within cofactor metabolism; pyridoxal 5'-phosphate salvage; pyridoxal 5'-phosphate from pyridoxamine 5'-phosphate: step 1/1. Its pathway is cofactor metabolism; pyridoxal 5'-phosphate salvage; pyridoxal 5'-phosphate from pyridoxine 5'-phosphate: step 1/1. Catalyzes the oxidation of either pyridoxine 5'-phosphate (PNP) or pyridoxamine 5'-phosphate (PMP) into pyridoxal 5'-phosphate (PLP). This is Pyridoxine/pyridoxamine 5'-phosphate oxidase from Sinorhizobium fredii (strain NBRC 101917 / NGR234).